Reading from the N-terminus, the 141-residue chain is Ribosome-binding factor A (141 aa).

Residues 120–141 form a disordered region; it reads SPHVQRDLQENDDQEDDSEGSL. Positions 129-141 are enriched in acidic residues; sequence ENDDQEDDSEGSL.

The protein belongs to the RbfA family. Monomer. Binds 30S ribosomal subunits, but not 50S ribosomal subunits or 70S ribosomes.

The protein localises to the cytoplasm. Functionally, one of several proteins that assist in the late maturation steps of the functional core of the 30S ribosomal subunit. Associates with free 30S ribosomal subunits (but not with 30S subunits that are part of 70S ribosomes or polysomes). Required for efficient processing of 16S rRNA. May interact with the 5'-terminal helix region of 16S rRNA. The polypeptide is Ribosome-binding factor A (Zymomonas mobilis subsp. mobilis (strain ATCC 31821 / ZM4 / CP4)).